The chain runs to 210 residues: dTTP/UTP pyrophosphatase (210 aa).

Asp-80 (proton acceptor) is an active-site residue.

This sequence belongs to the Maf family. YhdE subfamily. Requires a divalent metal cation as cofactor.

The protein localises to the cytoplasm. The catalysed reaction is dTTP + H2O = dTMP + diphosphate + H(+). The enzyme catalyses UTP + H2O = UMP + diphosphate + H(+). Functionally, nucleoside triphosphate pyrophosphatase that hydrolyzes dTTP and UTP. May have a dual role in cell division arrest and in preventing the incorporation of modified nucleotides into cellular nucleic acids. This is dTTP/UTP pyrophosphatase from Nitratidesulfovibrio vulgaris (strain ATCC 29579 / DSM 644 / CCUG 34227 / NCIMB 8303 / VKM B-1760 / Hildenborough) (Desulfovibrio vulgaris).